An 86-amino-acid polypeptide reads, in one-letter code: Small ribosomal subunit protein bS20 (86 aa).

The protein belongs to the bacterial ribosomal protein bS20 family.

Its function is as follows. Binds directly to 16S ribosomal RNA. This Bifidobacterium longum subsp. infantis (strain ATCC 15697 / DSM 20088 / JCM 1222 / NCTC 11817 / S12) protein is Small ribosomal subunit protein bS20.